We begin with the raw amino-acid sequence, 377 residues long: Probable protein phosphatase 2C 7 (377 aa).

Disordered stretches follow at residues 1–68 (MAAH…GKAA) and 80–99 (TTVA…EDDE). Positions 21–39 (PPAAEAEAAAAAAAIARAA) are enriched in low complexity. Over residues 51–63 (GVRHPLKHRRFRA) the composition is skewed to basic residues. A compositionally biased stretch (low complexity) spans 80–89 (TTVAEATATG). The PPM-type phosphatase domain maps to 115-361 (SCGYSSFRGR…DNITCIVVKF (247 aa)). Residues D151, G152, D313, and D352 each contribute to the Mn(2+) site.

The protein belongs to the PP2C family. Requires Mg(2+) as cofactor. The cofactor is Mn(2+).

It catalyses the reaction O-phospho-L-seryl-[protein] + H2O = L-seryl-[protein] + phosphate. It carries out the reaction O-phospho-L-threonyl-[protein] + H2O = L-threonyl-[protein] + phosphate. In Oryza sativa subsp. japonica (Rice), this protein is Probable protein phosphatase 2C 7.